A 143-amino-acid polypeptide reads, in one-letter code: Transcriptional regulator MraZ (143 aa).

2 SpoVT-AbrB domains span residues 5-47 and 76-119; these read TYTP…PKEE and ADEQ…DAQA.

This sequence belongs to the MraZ family. Forms oligomers.

The protein resides in the cytoplasm. The protein localises to the nucleoid. This chain is Transcriptional regulator MraZ, found in Corynebacterium efficiens (strain DSM 44549 / YS-314 / AJ 12310 / JCM 11189 / NBRC 100395).